The primary structure comprises 492 residues: Cobyric acid synthase (492 aa).

The GATase cobBQ-type domain maps to 252–440 (QLNVVVPVLT…LHGIFEQTEA (189 aa)). Catalysis depends on Cys-333, which acts as the Nucleophile. His-432 is an active-site residue.

The protein belongs to the CobB/CobQ family. CobQ subfamily.

It participates in cofactor biosynthesis; adenosylcobalamin biosynthesis. In terms of biological role, catalyzes amidations at positions B, D, E, and G on adenosylcobyrinic A,C-diamide. NH(2) groups are provided by glutamine, and one molecule of ATP is hydrogenolyzed for each amidation. This is Cobyric acid synthase from Photobacterium profundum (strain SS9).